Here is a 98-residue protein sequence, read N- to C-terminus: Small ribosomal subunit protein bS20 (98 aa).

The span at Met1 to Arg15 shows a compositional bias: basic residues. The tract at residues Met1 to Arg21 is disordered.

The protein belongs to the bacterial ribosomal protein bS20 family.

Its function is as follows. Binds directly to 16S ribosomal RNA. In Chlamydia felis (strain Fe/C-56) (Chlamydophila felis), this protein is Small ribosomal subunit protein bS20.